Consider the following 946-residue polypeptide: Bifunctional glutamine synthetase adenylyltransferase/adenylyl-removing enzyme (946 aa).

The segment at 1–440 is adenylyl removase; that stretch reads MKPLSSPLQQ…VFNELIGDDE (440 aa). The adenylyl transferase stretch occupies residues 449–946; that stretch reads SEQWRELWQD…VSWQKWLVEE (498 aa).

The protein belongs to the GlnE family. Requires Mg(2+) as cofactor.

It catalyses the reaction [glutamine synthetase]-O(4)-(5'-adenylyl)-L-tyrosine + phosphate = [glutamine synthetase]-L-tyrosine + ADP. The enzyme catalyses [glutamine synthetase]-L-tyrosine + ATP = [glutamine synthetase]-O(4)-(5'-adenylyl)-L-tyrosine + diphosphate. Involved in the regulation of glutamine synthetase GlnA, a key enzyme in the process to assimilate ammonia. When cellular nitrogen levels are high, the C-terminal adenylyl transferase (AT) inactivates GlnA by covalent transfer of an adenylyl group from ATP to specific tyrosine residue of GlnA, thus reducing its activity. Conversely, when nitrogen levels are low, the N-terminal adenylyl removase (AR) activates GlnA by removing the adenylyl group by phosphorolysis, increasing its activity. The regulatory region of GlnE binds the signal transduction protein PII (GlnB) which indicates the nitrogen status of the cell. In Escherichia coli (strain SMS-3-5 / SECEC), this protein is Bifunctional glutamine synthetase adenylyltransferase/adenylyl-removing enzyme.